Reading from the N-terminus, the 344-residue chain is Methionine import ATP-binding protein MetN 1 (344 aa).

Residues 2–241 (IELRNLSQRF…PHHEVTRALI (240 aa)) enclose the ABC transporter domain. 38-45 (GRSGAGKS) contributes to the ATP binding site.

The protein belongs to the ABC transporter superfamily. Methionine importer (TC 3.A.1.24) family. In terms of assembly, the complex is composed of two ATP-binding proteins (MetN), two transmembrane proteins (MetI) and a solute-binding protein (MetQ).

The protein resides in the cell inner membrane. It carries out the reaction L-methionine(out) + ATP + H2O = L-methionine(in) + ADP + phosphate + H(+). The enzyme catalyses D-methionine(out) + ATP + H2O = D-methionine(in) + ADP + phosphate + H(+). In terms of biological role, part of the ABC transporter complex MetNIQ involved in methionine import. Responsible for energy coupling to the transport system. The polypeptide is Methionine import ATP-binding protein MetN 1 (Burkholderia ambifaria (strain ATCC BAA-244 / DSM 16087 / CCUG 44356 / LMG 19182 / AMMD) (Burkholderia cepacia (strain AMMD))).